Consider the following 95-residue polypeptide: Defensin-1 (95 aa).

The signal sequence occupies residues 1–19 (MKIYFIVGLLFMAMVAIMA). The propeptide occupies 20–43 (APVEDEFEPLEHFENEERADRHRR). Disulfide bonds link C46-C74, C60-C79, and C64-C81. Phenylalanine amide is present on F94.

Its subcellular location is the secreted. Its function is as follows. Found in royal jelly and in hemolymph, potent antibacterial protein against Gram-positive bacteria at low concentration. The protein is Defensin-1 of Apis mellifera carnica (Carniolan honeybee).